We begin with the raw amino-acid sequence, 251 residues long: Insulin-induced gene 1 protein (251 aa).

Residues 1-58 are Cytoplasmic-facing; that stretch reads MQTLEEHCWSCSCTRGRDKKGTKVSAWLARRVGKAMSSLNSLLSLAYSTLASSEGRSL. The chain crosses the membrane as a helical span at residues 59–81; sequence IQRSLVLFTVGVFLALVLNLLQI. The Extracellular portion of the chain corresponds to 82-100; it reads QRNVTLFPEEVIATIFSSA. The helical transmembrane segment at 101 to 118 threads the bilayer; the sequence is WWVPPCCGTAAAVVGLLY. Residues 119–133 are Cytoplasmic-facing; it reads PCIDSRIGEPHKFKR. Residues 134–156 form a helical membrane-spanning segment; it reads EWASVMRCIAVFVGINHASAKLD. The Extracellular segment spans residues 157-159; the sequence is FAN. The chain crosses the membrane as a helical span at residues 160–178; sequence NVQLSLTLAALSLGLWWTF. Topologically, residues 179–183 are cytoplasmic; the sequence is DRSRS. Residues 184–205 form a helical membrane-spanning segment; the sequence is GLGLGITIAFLATLITQFLVYN. At 206-219 the chain is on the extracellular side; sequence GVYQYTSPDFLYIR. A helical membrane pass occupies residues 220 to 237; that stretch reads SWLPCIFFSGGVTVGNIG. The Cytoplasmic portion of the chain corresponds to 238–251; the sequence is RQLAMGSSEKTHGD. The short motif at 245 to 251 is the KxHxx element; it reads SEKTHGD.

This sequence belongs to the INSIG family. In terms of assembly, interacts with scap; interaction is direct and only takes place in the presence of sterols; it prevents interaction between scap and the coat protein complex II (COPII). Associates with the SCAP-SREBP complex; association is mediated via its interaction with scap and only takes place in the presence of sterols.

It localises to the endoplasmic reticulum membrane. Functionally, oxysterol-binding protein that mediates feedback control of cholesterol synthesis by controlling both endoplasmic reticulum to Golgi transport of scap and degradation of hmgcr. Acts as a negative regulator of cholesterol biosynthesis by mediating the retention of the SCAP-SREBP complex in the endoplasmic reticulum, thereby blocking the processing of sterol regulatory element-binding proteins (SREBPs). Binds oxysterol, including 25-hydroxycholesterol, regulating interaction with scap and retention of the SCAP-SREBP complex in the endoplasmic reticulum. In presence of oxysterol, interacts with scap, retaining the SCAP-SREBP complex in the endoplasmic reticulum, thereby preventing scap from escorting SREBPs to the Golgi. Sterol deprivation reduces oxysterol-binding, disrupting the interaction between insig1 and scap, thereby promoting Golgi transport of the SCAP-SREBP complex, followed by processing and nuclear translocation of SREBPs. Also regulates cholesterol synthesis by regulating degradation of hmgcr. In Xenopus laevis (African clawed frog), this protein is Insulin-induced gene 1 protein.